The following is a 548-amino-acid chain: Alpha-humulene synthase (548 aa).

Positions 302, 306, and 453 each coordinate Mg(2+). Residues 302–306 (DDIYD) carry the DDXXD motif motif.

Belongs to the terpene synthase family. In terms of tissue distribution, mostly expressed in rhizomes.

The enzyme catalyses (2E,6E)-farnesyl diphosphate = alpha-humulene + diphosphate. In terms of biological role, catalyzes the formation of alpha-humulene in the first step of zerumbone biosynthesis, a highly promising multi-anticancer agent. Also mediates formation of beta-caryophyllene at a much lower level. This chain is Alpha-humulene synthase (ZSS1), found in Zingiber zerumbet (Shampoo ginger).